Here is a 96-residue protein sequence, read N- to C-terminus: MSTKYETMYILRPDLTDEIIDQTITRYQTLLAEQGAAPVETQHRGKRRLAYELKKFKEGIYVQMNYDAPTTAVAELEKAFRLSEEVIRFLTVREED.

Belongs to the bacterial ribosomal protein bS6 family.

Functionally, binds together with bS18 to 16S ribosomal RNA. The polypeptide is Small ribosomal subunit protein bS6 (Gloeobacter violaceus (strain ATCC 29082 / PCC 7421)).